A 255-amino-acid polypeptide reads, in one-letter code: Triosephosphate isomerase (255 aa).

Residue 10 to 12 (NWK) coordinates substrate. The active-site Electrophile is His96. The active-site Proton acceptor is Glu169. Substrate is bound by residues Gly175, Ser214, and 235–236 (GG).

The protein belongs to the triosephosphate isomerase family. As to quaternary structure, homodimer.

It localises to the cytoplasm. It carries out the reaction D-glyceraldehyde 3-phosphate = dihydroxyacetone phosphate. Its pathway is carbohydrate biosynthesis; gluconeogenesis. The protein operates within carbohydrate degradation; glycolysis; D-glyceraldehyde 3-phosphate from glycerone phosphate: step 1/1. In terms of biological role, involved in the gluconeogenesis. Catalyzes stereospecifically the conversion of dihydroxyacetone phosphate (DHAP) to D-glyceraldehyde-3-phosphate (G3P). The chain is Triosephosphate isomerase from Coxiella burnetii (strain Dugway 5J108-111).